A 329-amino-acid polypeptide reads, in one-letter code: Transmembrane protein I329L (329 aa).

The N-terminal stretch at 1–31 (MLRVFIFFVFLGSGLAGKVKSPITCKYFISK) is a signal peptide. Asn32, Asn39, Asn44, Asn58, Asn76, Asn82, Asn101, Asn185, and Asn219 each carry an N-linked (GlcNAc...) asparagine; by host glycan. At 32–239 (NNTWYKYNVT…NTERYKNCYP (208 aa)) the chain is on the extracellular side. The helical transmembrane segment at 240 to 260 (FVLVSIICSCISSLFLLICLL) threads the bilayer. The Cytoplasmic portion of the chain corresponds to 261–329 (RTICKKYSCT…EKKVSCSRRK (69 aa)).

The protein belongs to the asfivirus I329L family. In terms of processing, highly glycosylated.

The protein localises to the host endoplasmic reticulum membrane. It is found in the host Golgi apparatus membrane. In terms of biological role, viral TLR3 homolog that probably prevents TLR3 dimerization and subsequent induction of IFN. Inhibits dsRNA-stimulated activation of NF-kB and IRF3. The sequence is that of Transmembrane protein I329L from Ornithodoros (relapsing fever ticks).